A 101-amino-acid chain; its full sequence is uncharacterized protein (101 aa).

This is an uncharacterized protein from Mycobacterium tuberculosis (strain CDC 1551 / Oshkosh).